The chain runs to 369 residues: Maltose/maltodextrin import ATP-binding protein MalK (369 aa).

Residues 4-234 (VTLSSVYKAF…PANRFVAGFI (231 aa)) enclose the ABC transporter domain. 36–43 (GPSGCGKS) contacts ATP.

Belongs to the ABC transporter superfamily. Maltooligosaccharide importer (TC 3.A.1.1.1) family. In terms of assembly, the complex is composed of two ATP-binding proteins (MalK), two transmembrane proteins (MalG and MalK) and a solute-binding protein (MalE).

The protein localises to the cell inner membrane. It catalyses the reaction D-maltose(out) + ATP + H2O = D-maltose(in) + ADP + phosphate + H(+). Its function is as follows. Part of the ABC transporter complex MalEFGK involved in maltose/maltodextrin import. Responsible for energy coupling to the transport system. The polypeptide is Maltose/maltodextrin import ATP-binding protein MalK (Yersinia pestis bv. Antiqua (strain Antiqua)).